The primary structure comprises 191 residues: Thymidine kinase (191 aa).

ATP is bound by residues 15-22 and 88-91; these read GPMYSGKT and DEAQ. E89 functions as the Proton acceptor in the catalytic mechanism. Zn(2+) is bound by residues C145, C148, C183, and C186.

The protein belongs to the thymidine kinase family. As to quaternary structure, homotetramer.

The protein resides in the cytoplasm. It catalyses the reaction thymidine + ATP = dTMP + ADP + H(+). The protein is Thymidine kinase of Clostridium botulinum (strain Hall / ATCC 3502 / NCTC 13319 / Type A).